The primary structure comprises 132 residues: Small ribosomal subunit protein uS8 (132 aa).

This sequence belongs to the universal ribosomal protein uS8 family. In terms of assembly, part of the 30S ribosomal subunit. Contacts proteins S5 and S12.

In terms of biological role, one of the primary rRNA binding proteins, it binds directly to 16S rRNA central domain where it helps coordinate assembly of the platform of the 30S subunit. In Ehrlichia canis (strain Jake), this protein is Small ribosomal subunit protein uS8.